A 318-amino-acid polypeptide reads, in one-letter code: NLP effector protein 9 (318 aa).

The signal sequence occupies residues 1-19; that stretch reads MRLFAFLWSSVAFLSTVQA. The segment covering 24–35 has biased composition (low complexity); the sequence is TASQTQDDSSTP. Disordered regions lie at residues 24–43 and 50–93; these read TASQ…PDKY and LRTK…PAPT. Residues 55 to 65 show a composition bias toward polar residues; sequence PMATPNRTIMP. N-linked (GlcNAc...) asparagine glycosylation is present at N60. Pro residues predominate over residues 73-93; the sequence is PEPPTPEPTYLPTLSPTPAPT. The Conserved undecapeptide motif I motif lies at 185-195; it reads AIMYSWYFPKD. The short motif at 202-208 is the Hepta-peptide GHRHDWE motif II element; sequence GHRHDWE.

This sequence belongs to the Necrosis inducing protein (NPP1) family.

Its subcellular location is the secreted. Secreted effector that contributes to virulence during infection by P.capsici. Induces distinct chlorosis at 3 days after inoculation of host C.annuum leaves, and all the chlorotic areas gradually turn brown and become moderately necrotic at 7 days after inoculation. Caused only small necrotic areas at 7 days after non-host N.benthamiana leaves infection. The protein is NLP effector protein 9 of Phytophthora capsici.